Here is a 285-residue protein sequence, read N- to C-terminus: V-type proton ATPase subunit D (285 aa).

The segment covering Q208–Q226 has biased composition (basic and acidic residues). The tract at residues Q208–F285 is disordered. A Phosphoserine modification is found at S219. Residues G227–K236 are compositionally biased toward polar residues. Over residues V248 to T263 the composition is skewed to basic and acidic residues. Over residues T271–F285 the composition is skewed to acidic residues.

It belongs to the V-ATPase D subunit family. In terms of assembly, V-ATPase is a heteromultimeric enzyme composed of a peripheral catalytic V1 complex (components A to H) attached to an integral membrane V0 proton pore complex (components: a, c, c', c'', d, e, f and VOA1).

The protein localises to the vacuole membrane. Subunit of the V1 complex of vacuolar(H+)-ATPase (V-ATPase), a multisubunit enzyme composed of a peripheral complex (V1) that hydrolyzes ATP and a membrane integral complex (V0) that translocates protons. V-ATPase is responsible for acidifying and maintaining the pH of intracellular compartments. The polypeptide is V-type proton ATPase subunit D (vma8) (Schizosaccharomyces pombe (strain 972 / ATCC 24843) (Fission yeast)).